A 373-amino-acid polypeptide reads, in one-letter code: Forkhead box protein E1 (373 aa).

The disordered stretch occupies residues 19-51 (KEERGETAAGAGVPGEATGRGAGGRRRKRPLQR). Over residues 41–50 (GGRRRKRPLQ) the composition is skewed to basic residues. A DNA-binding region (fork-head) is located at residues 53–147 (KPPYSYIALI…ESGSFLRRRK (95 aa)).

In terms of processing, phosphorylated. Detected in adult brain, placenta, lung, liver, skeletal muscle, kidney, pancreas, heart, colon, small intestine testis and thymus. Expression was strongest in heart and pancreas.

Its subcellular location is the nucleus. Functionally, transcription factor that binds consensus sites on a variety of gene promoters and activate their transcription. Involved in proper palate formation, most probably through the expression of MSX1 and TGFB3 genes which are direct targets of this transcription factor. Also implicated in thyroid gland morphogenesis. May indirectly play a role in cell growth and migration through the regulation of WNT5A expression. The polypeptide is Forkhead box protein E1 (FOXE1) (Homo sapiens (Human)).